The chain runs to 157 residues: Glutathione peroxidase homolog BsaA (157 aa).

The active site involves Cys35.

This sequence belongs to the glutathione peroxidase family.

The chain is Glutathione peroxidase homolog BsaA (bsaA) from Halalkalibacterium halodurans (strain ATCC BAA-125 / DSM 18197 / FERM 7344 / JCM 9153 / C-125) (Bacillus halodurans).